A 154-amino-acid polypeptide reads, in one-letter code: SsrA-binding protein (154 aa).

This sequence belongs to the SmpB family.

The protein resides in the cytoplasm. Required for rescue of stalled ribosomes mediated by trans-translation. Binds to transfer-messenger RNA (tmRNA), required for stable association of tmRNA with ribosomes. tmRNA and SmpB together mimic tRNA shape, replacing the anticodon stem-loop with SmpB. tmRNA is encoded by the ssrA gene; the 2 termini fold to resemble tRNA(Ala) and it encodes a 'tag peptide', a short internal open reading frame. During trans-translation Ala-aminoacylated tmRNA acts like a tRNA, entering the A-site of stalled ribosomes, displacing the stalled mRNA. The ribosome then switches to translate the ORF on the tmRNA; the nascent peptide is terminated with the 'tag peptide' encoded by the tmRNA and targeted for degradation. The ribosome is freed to recommence translation, which seems to be the essential function of trans-translation. In Enterococcus hirae (strain ATCC 9790 / DSM 20160 / JCM 8729 / LMG 6399 / NBRC 3181 / NCIMB 6459 / NCDO 1258 / NCTC 12367 / WDCM 00089 / R), this protein is SsrA-binding protein.